The following is a 160-amino-acid chain: uncharacterized protein (160 aa).

C2H2-type zinc fingers lie at residues 10 to 32 (LSCLLCEQTFDATEKLDEHLPTH), 41 to 64 (QTCDICGRTMRSSLELHQHYKRYH), and 75 to 98 (FQCQLCDKVFLLQDHLKVHVKIEH). Tyrosine 115 carries the post-translational modification Phosphotyrosine. Serine 116 bears the Phosphoserine mark.

The protein localises to the nucleus. In terms of biological role, may be involved in transcriptional regulation. This is an uncharacterized protein from Drosophila melanogaster (Fruit fly).